The following is a 319-amino-acid chain: N-acetyllactosaminide alpha-1,3-galactosyltransferase-like 1 (319 aa).

Residues Met-1–Glu-6 are Cytoplasmic-facing. The chain crosses the membrane as a helical; Signal-anchor for type II membrane protein span at residues Ala-7–Ser-26. Residues Arg-27 to Pro-319 are Lumenal-facing. N-linked (GlcNAc...) asparagine glycosylation is found at Asn-89 and Asn-101. Residues Phe-97–Phe-102, Ala-188–Asn-190, and His-210–Trp-213 contribute to the substrate site. Glu-278 (nucleophile) is an active-site residue.

The protein belongs to the glycosyltransferase 6 family. The cofactor is Mn(2+).

The protein resides in the golgi apparatus. It is found in the golgi stack membrane. The catalysed reaction is a beta-D-galactosyl-(1-&gt;4)-N-acetyl-beta-D-glucosaminyl derivative + UDP-alpha-D-galactose = an alpha-D-galactosyl-(1-&gt;3)-beta-D-galactosyl-(1-&gt;4)-N-acetyl-beta-D-glucosaminyl derivative + UDP + H(+). Its pathway is protein modification; protein glycosylation. Its function is as follows. Synthesizes the galactose-alpha(1,3)-galactose group by catalyzing the transfer of a galactose residue, with an alpha-1,3 linkage, on terminal lactosaminide (Gal-beta-1,4-GlcNAc-R) disaccharide borne by a glycoprotein or a glycolipid. The chain is N-acetyllactosaminide alpha-1,3-galactosyltransferase-like 1 (Ggta1l1) from Mus musculus (Mouse).